The following is a 617-amino-acid chain: MSPQRDRINAFYKDNPHPKGSRIVINREHLMIDRPYVLLAVLFVMFLSLIGLLAIAGIRLHRAAIYTAEIHKSLSTNLDVTNSIEHQVKDVLTPLFKIIGDEVGLRTPQRFTDLVKFISDKIKFLNPDREYDFRDLTWCINPPERIKLDYDQYCADVAAEELMNALVNSTLLEARATNQFLAVSKGNCSGPTTIRGQFSNMSLSLLDLYLSRGYNVSSIVTMTSQGMYGGTYLVGKPNLSSKGSELSQLSMHRVFEVGVIRNPGLGAPVFHMTNYFEQPVSNDFSNCMVALGELKFAALCHREDSITIPYQGSGKGVSFQLVKLGVWKSPTDMRSWVPLSTDDPVIDRLYLSSHRGVIADNQAKWAVPTTRTDDKLRMETCFQQACKGKNQALCENPEWAPLKDNRIPSYGVLSVNLSLTVELKIKIASGFGPLITHGSGMDLYKTNHNNVYWLTIPPMKNLALGVINTLEWIPRFKVSPNLFTVPIKEAGEDCHAPTYLPAEVDGDVKLSSNLVILPGQDLQYVLATYDTSRVEHAVVYYVYSPSRSFSYFYPFRLPIKGVPIELQVECFTWDKKLWCRHFCVLADSESGGHITHSGMVGMGVSCTVTREDGTNRR.

Over 1 to 37 (MSPQRDRINAFYKDNPHPKGSRIVINREHLMIDRPYV) the chain is Intravirion. A stalk region spans residues 1-154 (MSPQRDRINA…RIKLDYDQYC (154 aa)). The chain crosses the membrane as a helical span at residues 38–58 (LLAVLFVMFLSLIGLLAIAGI). The Virion surface portion of the chain corresponds to 59 to 617 (RLHRAAIYTA…VTREDGTNRR (559 aa)). Asn168 carries N-linked (GlcNAc...) asparagine; by host glycosylation. The tract at residues 171 to 175 (LLEAR) is involved in cell-to-cell fusion dependent on CADM1, CADM2, and NECTIN4. N-linked (GlcNAc...) asparagine; by host glycans are attached at residues Asn187, Asn200, Asn215, and Asn238. 5 disulfide bridges follow: Cys188/Cys606, Cys287/Cys300, Cys381/Cys494, Cys386/Cys394, and Cys570/Cys579. An N-linked (GlcNAc...) asparagine; by host glycan is attached at Asn416. The tract at residues 458 to 543 (PMKNLALGVI…VEHAVVYYVY (86 aa)) is interaction with host NECTIN4 receptor.

Belongs to the paramyxoviruses hemagglutinin-neuraminidase family. Non-sialidase subfamily. Homodimer; disulfide-linked. Further forms homotetramer (dimer of dimers). Interacts (via C-terminus) with human NECTIN4 (via N-terminus); this interaction allows attachment to the respiratory epithelium and viral entry. Interacts (via C-terminus) with human SLAMF1/CD150 (via N-terminus); this interaction allows attachment and viral entry into the CD150-expressing immune cells.

The protein resides in the virion membrane. The protein localises to the host cell membrane. Functionally, attaches the virus to the human SLAMF1/CD150 receptor for entry into host dendritic cells, macrophages, activated memory T cells and naive or memory B cells, thereby explaining the long immunosuppression that follows infection. In the respiratory airways, binds to the NECTIN4 receptor for entry into the host cell. During viral entry or virus-mediated fusion between infected cells and neighboring susceptible cells, the head domain of the H protein initially binds to its receptor and then the stalk region of the H protein transmits the fusion-triggering signal to the F protein. Unilateral receptor binding to only one of the covalently linked dimer pairs in the H tetramer is sufficient for F triggering. In case of neuropathogenic strains, host CADM1 (isoform 5) and CADM2 (isoform 5) can interact with measles hemagglutinin to trigger hyperfusogenic F-mediated membrane fusion and presumably transsynaptic cell-to-cell transmission of the virus. The chain is Hemagglutinin glycoprotein (H) from Homo sapiens (Human).